Here is an 87-residue protein sequence, read N- to C-terminus: MLFIDLEFFEYFLAFYPYNREYQNFFWEVCNMILFIIIALCGYLLFSFSKDNRRKPQKTSPLPAAAPHHNNLIDLDAIRQKRRMHLS.

Residues 25–47 (FFWEVCNMILFIIIALCGYLLFS) form a helical membrane-spanning segment.

Its subcellular location is the membrane. This is an uncharacterized protein from Bacillus subtilis (strain 168).